The primary structure comprises 278 residues: Nucleotide-binding protein LHK_02029 (278 aa).

8–15 contacts ATP; that stretch reads GLAGSGKS. Residue 57-60 participates in GTP binding; sequence DTRD.

This sequence belongs to the RapZ-like family.

Functionally, displays ATPase and GTPase activities. The sequence is that of Nucleotide-binding protein LHK_02029 from Laribacter hongkongensis (strain HLHK9).